We begin with the raw amino-acid sequence, 834 residues long: Arf-GAP with coiled-coil, ANK repeat and PH domain-containing protein 3 (834 aa).

The PH domain maps to 268-363; sequence GVVMEGYLFK…WVQAVQASIA (96 aa). Residues 375 to 400 are disordered; sequence SERLDRTASPSTSSIDSATDTRERGV. Residues 382–392 show a composition bias toward polar residues; sequence ASPSTSSIDSA. In terms of domain architecture, Arf-GAP spans 403-525; sequence ESVLQRVQSV…KFLRKAPMAP (123 aa). The C4-type zinc-finger motif lies at 418 to 441; the sequence is CGDCGQPDPRWASINLGVLLCIEC. The tract at residues 633–653 is disordered; sequence SVTEEEGAESEESSGEADGDT. Residues 634 to 653 show a composition bias toward acidic residues; that stretch reads VTEEEGAESEESSGEADGDT. ANK repeat units lie at residues 702–731, 735–764, and 768–797; these read EGKT…DVNQ, RGRA…DQHA, and EQRD…AEEM.

Functionally, GTPase-activating protein for the ADP ribosylation factor family. In Homo sapiens (Human), this protein is Arf-GAP with coiled-coil, ANK repeat and PH domain-containing protein 3 (ACAP3).